The chain runs to 507 residues: ATP synthase subunit alpha (507 aa).

170–177 contacts ATP; that stretch reads GDRQTGKT.

Belongs to the ATPase alpha/beta chains family. In terms of assembly, F-type ATPases have 2 components, CF(1) - the catalytic core - and CF(0) - the membrane proton channel. CF(1) has five subunits: alpha(3), beta(3), gamma(1), delta(1), epsilon(1). CF(0) has three main subunits: a(1), b(2) and c(9-12). The alpha and beta chains form an alternating ring which encloses part of the gamma chain. CF(1) is attached to CF(0) by a central stalk formed by the gamma and epsilon chains, while a peripheral stalk is formed by the delta and b chains.

The protein localises to the cell inner membrane. It catalyses the reaction ATP + H2O + 4 H(+)(in) = ADP + phosphate + 5 H(+)(out). Produces ATP from ADP in the presence of a proton gradient across the membrane. The alpha chain is a regulatory subunit. The sequence is that of ATP synthase subunit alpha from Thermosipho melanesiensis (strain DSM 12029 / CIP 104789 / BI429).